The primary structure comprises 173 residues: Crossover junction endodeoxyribonuclease RuvC (173 aa).

Residues Asp-8, Glu-69, and Asp-141 contribute to the active site. Asp-8, Glu-69, and Asp-141 together coordinate Mg(2+).

Belongs to the RuvC family. As to quaternary structure, homodimer which binds Holliday junction (HJ) DNA. The HJ becomes 2-fold symmetrical on binding to RuvC with unstacked arms; it has a different conformation from HJ DNA in complex with RuvA. In the full resolvosome a probable DNA-RuvA(4)-RuvB(12)-RuvC(2) complex forms which resolves the HJ. Mg(2+) serves as cofactor.

The protein localises to the cytoplasm. The enzyme catalyses Endonucleolytic cleavage at a junction such as a reciprocal single-stranded crossover between two homologous DNA duplexes (Holliday junction).. Its function is as follows. The RuvA-RuvB-RuvC complex processes Holliday junction (HJ) DNA during genetic recombination and DNA repair. Endonuclease that resolves HJ intermediates. Cleaves cruciform DNA by making single-stranded nicks across the HJ at symmetrical positions within the homologous arms, yielding a 5'-phosphate and a 3'-hydroxyl group; requires a central core of homology in the junction. The consensus cleavage sequence is 5'-(A/T)TT(C/G)-3'. Cleavage occurs on the 3'-side of the TT dinucleotide at the point of strand exchange. HJ branch migration catalyzed by RuvA-RuvB allows RuvC to scan DNA until it finds its consensus sequence, where it cleaves and resolves the cruciform DNA. The sequence is that of Crossover junction endodeoxyribonuclease RuvC from Xylella fastidiosa (strain 9a5c).